The sequence spans 109 residues: Flagellar hook-basal body complex protein FliE (109 aa).

Belongs to the FliE family.

The protein localises to the bacterial flagellum basal body. The polypeptide is Flagellar hook-basal body complex protein FliE (Pseudomonas paraeruginosa (strain DSM 24068 / PA7) (Pseudomonas aeruginosa (strain PA7))).